The sequence spans 98 residues: Omega-hexatoxin-Hr2b (98 aa).

A signal peptide spans Met-1–Cys-22. Positions Lys-24–Arg-56 are excised as a propeptide. Intrachain disulfides connect Cys-60-Cys-74, Cys-67-Cys-80, and Cys-73-Cys-85. Leu-97 carries the post-translational modification Leucine amide.

This sequence belongs to the neurotoxin 15 family. 02 (omega-actx) subfamily. Expressed by the venom gland.

It is found in the secreted. Functionally, potent inhibitor of insect, but not mammalian, voltage-gated calcium channels (Cav). This is Omega-hexatoxin-Hr2b from Atrax robustus (Sydney funnel-web spider).